Here is a 597-residue protein sequence, read N- to C-terminus: Phosphoinositide phosphatase SAC7 (597 aa).

In terms of domain architecture, SAC spans 130–458; it reads LSVAEKTTGL…GDEISIQYSG (329 aa). The Phosphatase catalytic core motif lies at 393–404; that stretch reads RSNCIDCLDRTN. 2 helical membrane passes run 528 to 548 and 559 to 579; these read AVAN…FATM and HKHL…AALV.

As to expression, ubiquitous.

Its subcellular location is the endoplasmic reticulum membrane. It is found in the cytoplasmic vesicle membrane. Its function is as follows. Phosphoinositide phosphatase that preferentially hydrolyzes PtdIns(4)P. Regulates the accumulation of PtdIns(4)P on membrane compartments at the tips of growing root hairs leading to proper root hair development. The chain is Phosphoinositide phosphatase SAC7 (SAC7) from Arabidopsis thaliana (Mouse-ear cress).